The following is a 258-amino-acid chain: Imidazole glycerol phosphate synthase subunit HisF (258 aa).

Catalysis depends on residues Asp-11 and Asp-130.

The protein belongs to the HisA/HisF family. As to quaternary structure, heterodimer of HisH and HisF.

Its subcellular location is the cytoplasm. The enzyme catalyses 5-[(5-phospho-1-deoxy-D-ribulos-1-ylimino)methylamino]-1-(5-phospho-beta-D-ribosyl)imidazole-4-carboxamide + L-glutamine = D-erythro-1-(imidazol-4-yl)glycerol 3-phosphate + 5-amino-1-(5-phospho-beta-D-ribosyl)imidazole-4-carboxamide + L-glutamate + H(+). It functions in the pathway amino-acid biosynthesis; L-histidine biosynthesis; L-histidine from 5-phospho-alpha-D-ribose 1-diphosphate: step 5/9. In terms of biological role, IGPS catalyzes the conversion of PRFAR and glutamine to IGP, AICAR and glutamate. The HisF subunit catalyzes the cyclization activity that produces IGP and AICAR from PRFAR using the ammonia provided by the HisH subunit. The polypeptide is Imidazole glycerol phosphate synthase subunit HisF (Serratia proteamaculans (strain 568)).